A 636-amino-acid chain; its full sequence is DNA-directed RNA polymerase subunit beta' (636 aa).

The Zn(2+) site is built by Cys-70, Cys-72, Cys-85, and Cys-88. Asp-471, Asp-473, and Asp-475 together coordinate Mg(2+).

It belongs to the RNA polymerase beta' chain family. RpoC1 subfamily. It depends on Mg(2+) as a cofactor. Zn(2+) serves as cofactor.

The protein resides in the plastid. It is found in the cyanelle. The catalysed reaction is RNA(n) + a ribonucleoside 5'-triphosphate = RNA(n+1) + diphosphate. DNA-dependent RNA polymerase catalyzes the transcription of DNA into RNA using the four ribonucleoside triphosphates as substrates. This Cyanophora paradoxa protein is DNA-directed RNA polymerase subunit beta'.